The sequence spans 187 residues: HTH-type transcriptional regulator NfxB (187 aa).

The segment at residues 26–45 (LKELAEAAGVSKATLHRFCG) is a DNA-binding region (H-T-H motif).

Its function is as follows. Confers resistance to guinolones. May negatively regulate the expression of genes that are associated with cell permeability to drugs. The protein is HTH-type transcriptional regulator NfxB (nfxB) of Pseudomonas aeruginosa (strain ATCC 15692 / DSM 22644 / CIP 104116 / JCM 14847 / LMG 12228 / 1C / PRS 101 / PAO1).